We begin with the raw amino-acid sequence, 98 residues long: PE family immunomodulator PE35 (98 aa).

Residues 1–90 (MEKMSHDPIA…DVARTYSQID (90 aa)) enclose the PE domain.

It belongs to the mycobacterial PE family. Interacts with PPE68. PE35/PPE68 complex interacts with human TLR2.

It localises to the secreted. The protein localises to the cell surface. Functionally, plays a major role in RD1-associated pathogenesis, and may contribute to the establishment and maintenance of M.tuberculosis infection. Together with PPE68, stimulates the secretion of IL-10 and MCP-1 from human macrophages, via the interaction with human Toll-like receptor 2 (TLR2). The chain is PE family immunomodulator PE35 (PE35) from Mycobacterium tuberculosis (strain CDC 1551 / Oshkosh).